The following is a 360-amino-acid chain: Phospho-N-acetylmuramoyl-pentapeptide-transferase (360 aa).

Helical transmembrane passes span 20 to 40 (YITF…FFFG), 71 to 91 (TPTM…LLWA), 93 to 113 (LDNG…AIGF), 134 to 154 (LLIG…LHPA), 168 to 188 (ALIN…LGAA), 199 to 219 (GLAI…AYMV), 239 to 259 (LAVF…YNAP), 263 to 283 (VFMG…IAVV), 288 to 308 (IVLA…IIQV), and 337 to 357 (QIVI…LATL).

This sequence belongs to the glycosyltransferase 4 family. MraY subfamily. Requires Mg(2+) as cofactor.

The protein localises to the cell inner membrane. The catalysed reaction is UDP-N-acetyl-alpha-D-muramoyl-L-alanyl-gamma-D-glutamyl-meso-2,6-diaminopimeloyl-D-alanyl-D-alanine + di-trans,octa-cis-undecaprenyl phosphate = di-trans,octa-cis-undecaprenyl diphospho-N-acetyl-alpha-D-muramoyl-L-alanyl-D-glutamyl-meso-2,6-diaminopimeloyl-D-alanyl-D-alanine + UMP. The protein operates within cell wall biogenesis; peptidoglycan biosynthesis. Functionally, catalyzes the initial step of the lipid cycle reactions in the biosynthesis of the cell wall peptidoglycan: transfers peptidoglycan precursor phospho-MurNAc-pentapeptide from UDP-MurNAc-pentapeptide onto the lipid carrier undecaprenyl phosphate, yielding undecaprenyl-pyrophosphoryl-MurNAc-pentapeptide, known as lipid I. The protein is Phospho-N-acetylmuramoyl-pentapeptide-transferase of Paracoccus denitrificans (strain Pd 1222).